Reading from the N-terminus, the 222-residue chain is DNA mismatch repair protein MutH (222 aa).

The protein belongs to the MutH family.

Its subcellular location is the cytoplasm. Functionally, sequence-specific endonuclease that cleaves unmethylated GATC sequences. It is involved in DNA mismatch repair. In Pasteurella multocida (strain Pm70), this protein is DNA mismatch repair protein MutH.